A 347-amino-acid polypeptide reads, in one-letter code: Phenylalanine--tRNA ligase alpha subunit (347 aa).

Glutamate 259 lines the Mg(2+) pocket.

The protein belongs to the class-II aminoacyl-tRNA synthetase family. Phe-tRNA synthetase alpha subunit type 1 subfamily. In terms of assembly, tetramer of two alpha and two beta subunits. Mg(2+) is required as a cofactor.

It is found in the cytoplasm. The catalysed reaction is tRNA(Phe) + L-phenylalanine + ATP = L-phenylalanyl-tRNA(Phe) + AMP + diphosphate + H(+). The protein is Phenylalanine--tRNA ligase alpha subunit of Oenococcus oeni (strain ATCC BAA-331 / PSU-1).